The following is a 93-amino-acid chain: Small ribosomal subunit protein bS16 (93 aa).

The protein belongs to the bacterial ribosomal protein bS16 family.

This is Small ribosomal subunit protein bS16 from Opitutus terrae (strain DSM 11246 / JCM 15787 / PB90-1).